The sequence spans 188 residues: Elongation factor P (188 aa).

At K34 the chain carries N6-(3,6-diaminohexanoyl)-5-hydroxylysine.

This sequence belongs to the elongation factor P family. May be beta-lysylated on the epsilon-amino group of Lys-34 by the combined action of EpmA and EpmB, and then hydroxylated on the C5 position of the same residue by EpmC (if this protein is present). Lysylation is critical for the stimulatory effect of EF-P on peptide-bond formation. The lysylation moiety may extend toward the peptidyltransferase center and stabilize the terminal 3-CCA end of the tRNA. Hydroxylation of the C5 position on Lys-34 may allow additional potential stabilizing hydrogen-bond interactions with the P-tRNA.

It is found in the cytoplasm. It participates in protein biosynthesis; polypeptide chain elongation. Involved in peptide bond synthesis. Alleviates ribosome stalling that occurs when 3 or more consecutive Pro residues or the sequence PPG is present in a protein, possibly by augmenting the peptidyl transferase activity of the ribosome. Modification of Lys-34 is required for alleviation. The chain is Elongation factor P from Photorhabdus laumondii subsp. laumondii (strain DSM 15139 / CIP 105565 / TT01) (Photorhabdus luminescens subsp. laumondii).